A 302-amino-acid chain; its full sequence is Bifunctional protein FolD (302 aa).

Residues 171 to 173, Ser196, and Ile237 each bind NADP(+); that span reads GRS.

This sequence belongs to the tetrahydrofolate dehydrogenase/cyclohydrolase family. As to quaternary structure, homodimer.

The catalysed reaction is (6R)-5,10-methylene-5,6,7,8-tetrahydrofolate + NADP(+) = (6R)-5,10-methenyltetrahydrofolate + NADPH. It catalyses the reaction (6R)-5,10-methenyltetrahydrofolate + H2O = (6R)-10-formyltetrahydrofolate + H(+). It functions in the pathway one-carbon metabolism; tetrahydrofolate interconversion. Functionally, catalyzes the oxidation of 5,10-methylenetetrahydrofolate to 5,10-methenyltetrahydrofolate and then the hydrolysis of 5,10-methenyltetrahydrofolate to 10-formyltetrahydrofolate. This chain is Bifunctional protein FolD, found in Sphingopyxis alaskensis (strain DSM 13593 / LMG 18877 / RB2256) (Sphingomonas alaskensis).